Reading from the N-terminus, the 393-residue chain is Formate-dependent phosphoribosylglycinamide formyltransferase (393 aa).

N(1)-(5-phospho-beta-D-ribosyl)glycinamide contacts are provided by residues 22 to 23 (EL) and Glu82. ATP-binding positions include Arg114, Lys155, 160 to 165 (SSGKGQ), 195 to 198 (EGFV), and Glu203. One can recognise an ATP-grasp domain in the interval 119–308 (RLAAEELGLP…EFALHVRAIL (190 aa)). Mg(2+) is bound by residues Glu267 and Glu279. N(1)-(5-phospho-beta-D-ribosyl)glycinamide-binding positions include Asp286, Lys356, and 363 to 364 (RR).

This sequence belongs to the PurK/PurT family. In terms of assembly, homodimer.

It carries out the reaction N(1)-(5-phospho-beta-D-ribosyl)glycinamide + formate + ATP = N(2)-formyl-N(1)-(5-phospho-beta-D-ribosyl)glycinamide + ADP + phosphate + H(+). Its pathway is purine metabolism; IMP biosynthesis via de novo pathway; N(2)-formyl-N(1)-(5-phospho-D-ribosyl)glycinamide from N(1)-(5-phospho-D-ribosyl)glycinamide (formate route): step 1/1. Involved in the de novo purine biosynthesis. Catalyzes the transfer of formate to 5-phospho-ribosyl-glycinamide (GAR), producing 5-phospho-ribosyl-N-formylglycinamide (FGAR). Formate is provided by PurU via hydrolysis of 10-formyl-tetrahydrofolate. The sequence is that of Formate-dependent phosphoribosylglycinamide formyltransferase from Nitratidesulfovibrio vulgaris (strain ATCC 29579 / DSM 644 / CCUG 34227 / NCIMB 8303 / VKM B-1760 / Hildenborough) (Desulfovibrio vulgaris).